The sequence spans 738 residues: NAD(P)H-quinone oxidoreductase subunit 5, chloroplastic (738 aa).

Transmembrane regions (helical) follow at residues 9–29, 39–59, 89–109, 125–145, 147–167, 185–205, 219–239, 258–278, 280–300, 327–347, 354–374, 396–416, 425–445, 542–562, 610–630, 691–711, and 717–737; these read WVIPLLPLPVIMSMGFGLFLI, IWAFPSILLLSIAMVFSLHLS, VDPLTSIMLILITTVGILVLI, FVYISFFNTSMLGLVTSSNLI, IYFFWELVGMCSYLLIGFWFT, GDFGLLLGILGFFWITGSLEF, NGINSLLTTLCAFLLFLGAVA, TPISALIHAATMVAAGIFLLA, LLPLFISLPLIMSFISLVGTI, LGYMMLALGIGSYQAALFHLI, ALLFLGSGSVIHSMEPLVGYS, TTFLCGTLSLCGIPPLACFWS, WLYSPFFGIIASFTAGLTAFY, LFPLLILLLFTLFIGSIGIPF, SLAIFGLFIAYIFYGSAYSFF, GVIDGIINGVGLAGFCIGEEI, and GRISSYLFFFLCYVSLFLFFI.

This sequence belongs to the complex I subunit 5 family. NDH is composed of at least 16 different subunits, 5 of which are encoded in the nucleus.

Its subcellular location is the plastid. It localises to the chloroplast thylakoid membrane. It catalyses the reaction a plastoquinone + NADH + (n+1) H(+)(in) = a plastoquinol + NAD(+) + n H(+)(out). The enzyme catalyses a plastoquinone + NADPH + (n+1) H(+)(in) = a plastoquinol + NADP(+) + n H(+)(out). Functionally, NDH shuttles electrons from NAD(P)H:plastoquinone, via FMN and iron-sulfur (Fe-S) centers, to quinones in the photosynthetic chain and possibly in a chloroplast respiratory chain. The immediate electron acceptor for the enzyme in this species is believed to be plastoquinone. Couples the redox reaction to proton translocation, and thus conserves the redox energy in a proton gradient. This is NAD(P)H-quinone oxidoreductase subunit 5, chloroplastic (ndhF) from Sorghum bicolor (Sorghum).